We begin with the raw amino-acid sequence, 364 residues long: Caffeic acid 3-O-methyltransferase 3 (364 aa).

Position 129-135 (129-135 (MNQDKVL)) interacts with substrate. The tract at residues 161–179 (AFEYHGTDPRFNKVFNKGM) is substrate binding. Positions 207, 230, 250, 251, and 264 each coordinate S-adenosyl-L-methionine. Catalysis depends on His268, which acts as the Proton acceptor.

The protein belongs to the class I-like SAM-binding methyltransferase superfamily. Cation-independent O-methyltransferase family. COMT subfamily. In terms of assembly, homodimer.

The catalysed reaction is (E)-caffeate + S-adenosyl-L-methionine = (E)-ferulate + S-adenosyl-L-homocysteine + H(+). Its pathway is aromatic compound metabolism; phenylpropanoid biosynthesis. Functionally, catalyzes the conversion of caffeic acid to ferulic acid and of 5-hydroxyferulic acid to sinapic acid. The resulting products may subsequently be converted to the corresponding alcohols that are incorporated into lignins. This chain is Caffeic acid 3-O-methyltransferase 3 (HOMT3), found in Populus kitakamiensis (Aspen).